Consider the following 122-residue polypeptide: Beta-2-microglobulin (122 aa).

Residues Met1–Ala22 form the signal peptide. In terms of domain architecture, Ig-like C1-type spans Pro27–Val115. Cys47 and Cys102 are oxidised to a cystine.

The protein belongs to the beta-2-microglobulin family. In terms of assembly, heterodimer of an alpha chain and a beta chain. Beta-2-microglobulin is the beta-chain of major histocompatibility complex class I molecules.

The protein localises to the secreted. Component of the class I major histocompatibility complex (MHC). Involved in the presentation of peptide antigens to the immune system. This chain is Beta-2-microglobulin (B2M), found in Trichosurus vulpecula (Brush-tailed possum).